A 273-amino-acid polypeptide reads, in one-letter code: Kit ligand (273 aa).

A signal peptide spans 1–25 (MKKTQTWIITCIYLQLLLFNPLVKT). The Extracellular segment spans residues 26–214 (KEICGNPVTD…AKAPEDSGLQ (189 aa)). 2 cysteine pairs are disulfide-bonded: Cys29–Cys114 and Cys68–Cys163. Asn90, Asn97, Asn145, and Asn195 each carry an N-linked (GlcNAc...) asparagine glycan. Residues 190–210 (ASSLRNDSSSSNRKAAKAPED) are disordered. Low complexity predominate over residues 191–202 (SSLRNDSSSSNR). Residues 215–237 (WTAMALPALISLVIGFAFGALYW) form a helical membrane-spanning segment. Residues 238 to 273 (KKKQSSLTRAVENIQINEEDNEISMLQQKEREFQEV) lie on the Cytoplasmic side of the membrane.

This sequence belongs to the SCF family. Homodimer, non-covalently linked. Heterotetramer with KIT, binding two KIT molecules; thereby mediates KIT dimerization and subsequent activation by autophosphorylation. In terms of processing, a soluble form is produced by proteolytic processing of isoform 1 in the extracellular domain. As to expression, expressed in the cochlea.

The protein localises to the cell membrane. Its subcellular location is the cytoplasm. It localises to the cytoskeleton. The protein resides in the cell projection. It is found in the lamellipodium. The protein localises to the filopodium. Its subcellular location is the secreted. Ligand for the receptor-type protein-tyrosine kinase KIT. Plays an essential role in the regulation of cell survival and proliferation, hematopoiesis, stem cell maintenance, gametogenesis, mast cell development, migration and function, and in melanogenesis. KITLG/SCF binding can activate several signaling pathways. Promotes phosphorylation of PIK3R1, the regulatory subunit of phosphatidylinositol 3-kinase, and subsequent activation of the kinase AKT1. KITLG/SCF and KIT also transmit signals via GRB2 and activation of RAS, RAF1 and the MAP kinases MAPK1/ERK2 and/or MAPK3/ERK1. KITLG/SCF and KIT promote activation of STAT family members STAT1, STAT3 and STAT5. KITLG/SCF and KIT promote activation of PLCG1, leading to the production of the cellular signaling molecules diacylglycerol and inositol 1,4,5-trisphosphate. KITLG/SCF acts synergistically with other cytokines, probably interleukins. In Mus musculus (Mouse), this protein is Kit ligand (Kitlg).